A 343-amino-acid polypeptide reads, in one-letter code: Phenylalanine--tRNA ligase alpha subunit (343 aa).

Glu-268 serves as a coordination point for Mg(2+).

It belongs to the class-II aminoacyl-tRNA synthetase family. Phe-tRNA synthetase alpha subunit type 1 subfamily. In terms of assembly, tetramer of two alpha and two beta subunits. Mg(2+) serves as cofactor.

Its subcellular location is the cytoplasm. The catalysed reaction is tRNA(Phe) + L-phenylalanine + ATP = L-phenylalanyl-tRNA(Phe) + AMP + diphosphate + H(+). The sequence is that of Phenylalanine--tRNA ligase alpha subunit from Cupriavidus taiwanensis (strain DSM 17343 / BCRC 17206 / CCUG 44338 / CIP 107171 / LMG 19424 / R1) (Ralstonia taiwanensis (strain LMG 19424)).